Here is a 183-residue protein sequence, read N- to C-terminus: Lipid droplet coating protein Cap20 (183 aa).

This sequence belongs to the perilipin family.

Its subcellular location is the lipid droplet. Its function is as follows. Lipid droplet coating protein that regulates lipid metabolism, appressorial turgor pressure, and virulence. Appressorial turgor pressure is important for the mechanical penetration of the host cuticle during infection. In Colletotrichum gloeosporioides (Anthracnose fungus), this protein is Lipid droplet coating protein Cap20 (Cap20).